A 303-amino-acid polypeptide reads, in one-letter code: Recombination-associated protein RdgC (303 aa).

The protein belongs to the RdgC family.

It is found in the cytoplasm. It localises to the nucleoid. In terms of biological role, may be involved in recombination. The polypeptide is Recombination-associated protein RdgC (Shewanella halifaxensis (strain HAW-EB4)).